Reading from the N-terminus, the 22-residue chain is 5-methyltetrahydropteroyltriglutamate--homocysteine methyltransferase (22 aa).

This sequence belongs to the vitamin-B12 independent methionine synthase family. The cofactor is Zn(2+).

The protein resides in the cytoplasm. The enzyme catalyses 5-methyltetrahydropteroyltri-L-glutamate + L-homocysteine = tetrahydropteroyltri-L-glutamate + L-methionine. The protein operates within amino-acid biosynthesis; L-methionine biosynthesis via de novo pathway; L-methionine from L-homocysteine (MetE route): step 1/1. In terms of biological role, catalyzes the transfer of a methyl group from 5-methyltetrahydrofolate to homocysteine resulting in methionine formation. This is 5-methyltetrahydropteroyltriglutamate--homocysteine methyltransferase from Pseudotsuga menziesii (Douglas-fir).